The sequence spans 92 residues: Small ribosomal subunit protein uS19 (92 aa).

It belongs to the universal ribosomal protein uS19 family.

Its function is as follows. Protein S19 forms a complex with S13 that binds strongly to the 16S ribosomal RNA. The polypeptide is Small ribosomal subunit protein uS19 (Streptococcus pyogenes serotype M49 (strain NZ131)).